Here is a 434-residue protein sequence, read N- to C-terminus: Glutamyl-tRNA reductase (434 aa).

Substrate is bound by residues 54–57, serine 113, 118–120, and glutamine 124; these read TCNR and EAQ. Catalysis depends on cysteine 55, which acts as the Nucleophile. NADP(+) is bound at residue 193-198; that stretch reads GGGEVS.

Belongs to the glutamyl-tRNA reductase family. As to quaternary structure, homodimer.

It carries out the reaction (S)-4-amino-5-oxopentanoate + tRNA(Glu) + NADP(+) = L-glutamyl-tRNA(Glu) + NADPH + H(+). Its pathway is porphyrin-containing compound metabolism; protoporphyrin-IX biosynthesis; 5-aminolevulinate from L-glutamyl-tRNA(Glu): step 1/2. The protein operates within porphyrin-containing compound metabolism; chlorophyll biosynthesis. In terms of biological role, catalyzes the NADPH-dependent reduction of glutamyl-tRNA(Glu) to glutamate 1-semialdehyde (GSA). The protein is Glutamyl-tRNA reductase of Chloroflexus aurantiacus (strain ATCC 29366 / DSM 635 / J-10-fl).